Consider the following 642-residue polypeptide: Probable Xaa-Pro aminopeptidase P (642 aa).

Mn(2+) contacts are provided by D439, D450, E548, and E562.

This sequence belongs to the peptidase M24B family. Requires Mn(2+) as cofactor.

The enzyme catalyses Release of any N-terminal amino acid, including proline, that is linked to proline, even from a dipeptide or tripeptide.. Catalyzes the removal of a penultimate prolyl residue from the N-termini of peptides. The polypeptide is Probable Xaa-Pro aminopeptidase P (AMPP) (Laccaria bicolor (strain S238N-H82 / ATCC MYA-4686) (Bicoloured deceiver)).